A 304-amino-acid chain; its full sequence is Methionyl-tRNA formyltransferase (304 aa).

111-114 (SLLP) provides a ligand contact to (6S)-5,6,7,8-tetrahydrofolate.

The protein belongs to the Fmt family.

The enzyme catalyses L-methionyl-tRNA(fMet) + (6R)-10-formyltetrahydrofolate = N-formyl-L-methionyl-tRNA(fMet) + (6S)-5,6,7,8-tetrahydrofolate + H(+). Functionally, attaches a formyl group to the free amino group of methionyl-tRNA(fMet). The formyl group appears to play a dual role in the initiator identity of N-formylmethionyl-tRNA by promoting its recognition by IF2 and preventing the misappropriation of this tRNA by the elongation apparatus. The chain is Methionyl-tRNA formyltransferase from Campylobacter fetus subsp. fetus (strain 82-40).